We begin with the raw amino-acid sequence, 782 residues long: Endonuclease MutS2 (782 aa).

336-343 lines the ATP pocket; it reads GPNTGGKT. Residues 707–782 enclose the Smr domain; it reads LDLRGYRYED…GFGVTVATLK (76 aa).

It belongs to the DNA mismatch repair MutS family. MutS2 subfamily. Homodimer. Binds to stalled ribosomes, contacting rRNA.

Functionally, endonuclease that is involved in the suppression of homologous recombination and thus may have a key role in the control of bacterial genetic diversity. In terms of biological role, acts as a ribosome collision sensor, splitting the ribosome into its 2 subunits. Detects stalled/collided 70S ribosomes which it binds and splits by an ATP-hydrolysis driven conformational change. Acts upstream of the ribosome quality control system (RQC), a ribosome-associated complex that mediates the extraction of incompletely synthesized nascent chains from stalled ribosomes and their subsequent degradation. Probably generates substrates for RQC. The protein is Endonuclease MutS2 of Staphylococcus aureus (strain Mu50 / ATCC 700699).